We begin with the raw amino-acid sequence, 132 residues long: Protamine (132 aa).

2 disordered regions span residues 17–46 (GGKK…RGGR) and 96–115 (SMLK…RRRR). 2 stretches are compositionally biased toward basic residues: residues 18-46 (GKKR…RGGR) and 98-115 (LKKR…RRRR).

The protein belongs to the UPF0771 family. As to expression, testis.

Its subcellular location is the nucleus. The protein resides in the chromosome. Functionally, protamines substitute for histones in the chromatin of sperm during the haploid phase of spermatogenesis. They compact sperm DNA into a highly condensed, stable and inactive complex. The polypeptide is Protamine (Anthonomus grandis (Mexican cotton boll weevil)).